The chain runs to 196 residues: Orotate phosphoribosyltransferase (196 aa).

5-phospho-alpha-D-ribose 1-diphosphate is bound at residue 117 to 125 (EDIVTTGLS). Positions 121 and 149 each coordinate orotate.

The protein belongs to the purine/pyrimidine phosphoribosyltransferase family. PyrE subfamily. In terms of assembly, homodimer. Mg(2+) serves as cofactor.

It catalyses the reaction orotidine 5'-phosphate + diphosphate = orotate + 5-phospho-alpha-D-ribose 1-diphosphate. Its pathway is pyrimidine metabolism; UMP biosynthesis via de novo pathway; UMP from orotate: step 1/2. Functionally, catalyzes the transfer of a ribosyl phosphate group from 5-phosphoribose 1-diphosphate to orotate, leading to the formation of orotidine monophosphate (OMP). This Methylorubrum extorquens (strain PA1) (Methylobacterium extorquens) protein is Orotate phosphoribosyltransferase.